A 457-amino-acid polypeptide reads, in one-letter code: BAG family molecular chaperone regulator 4 (457 aa).

The span at 1–20 (MSALRRSGYGPSDGPSYGRY) shows a compositional bias: low complexity. Positions 1-104 (MSALRRSGYG…PYPGYNSNYW (104 aa)) are disordered. S7 is modified (phosphoserine). Positions 31–48 (HVPPPLYPPLRPEPPQPP) are enriched in pro residues. An omega-N-methylarginine mark is found at R41, R54, R108, and R185. 2 disordered regions span residues 128–335 (LNSY…SDLL) and 348–374 (YGNA…SSDE). The span at 160-193 (YTQSNYSTEVPNTYRSPGNSPTPMSRWMYSQQDC) shows a compositional bias: polar residues. A compositionally biased stretch (low complexity) spans 255 to 268 (PWPSAAPSAPSAGS). Residues 284 to 295 (PQPPPSPPPQQP) are compositionally biased toward pro residues. Composition is skewed to polar residues over residues 326 to 335 (AVNNDNSDLL) and 348 to 365 (YGNA…SNNL). The 78-residue stretch at 379–456 (SIKKIIHVLE…AILEKLEKKG (78 aa)) folds into the BAG domain.

In terms of assembly, binds to the ATPase domain of HSP/HSC70 chaperones. Binds to the death domain of TNFRSF12. Binds to the death domain of TNFRSF1A in the absence of TNF and thereby prevents binding of adapter molecules such as TRADD or TRAF2. Interacts with PRKN.

The protein resides in the cytoplasm. In terms of biological role, inhibits the chaperone activity of HSP70/HSC70 by promoting substrate release. Prevents constitutive TNFRSF1A signaling. Negative regulator of PRKN translocation to damaged mitochondria. The protein is BAG family molecular chaperone regulator 4 (Bag4) of Mus musculus (Mouse).